The chain runs to 485 residues: MAAVFDLDLETEEGSEGEGEPEFSPADVCPLGELRAAGLETVGHYEEVELTESSVNLGPERIGPHCFELLSVLGKGGYGKVFQVRKVQGTNLGKIYAMKVLRKAKIVCSAKDTAHTRAERNILESVKHPFIVELAYAFQTGGKLYLILECLSGGELFTHLEREGIFLEDTACFYLAEITLALGHLHSHGIIYRDLKPENIMLSSQGHIKLTDFGLCKESIHEGAITHTFCGTIEYMAPEILVRTGHNRAVDWWSLGALMYDMLTGSPPFTAENRKKTMDKIIKGKLVLPPYLTPDARDLAKKFLKRNPTQRIGGGLGDAADVQRHPFFRHINWDDLLARRVDPPFRPSLQSEEDVSQFDARFTRQTPVDSPDDTALSESANQAFLGFTYVAPSVLDSIKEGFSFQPKLRSPRRLNSSPRTPISPLKFSPFEGFRPSPGPPEPMEPSLPPLLPSPPSPPPTSTAPLPIRPPSGTKKSKKGRGRSGR.

The interval 1-26 (MAAVFDLDLETEEGSEGEGEPEFSPA) is disordered. Residues 7–21 (LDLETEEGSEGEGEP) show a composition bias toward acidic residues. A Phosphoserine modification is found at Ser15. Residues 67 to 328 (FELLSVLGKG…AADVQRHPFF (262 aa)) enclose the Protein kinase domain. ATP is bound by residues 73 to 81 (LGKGGYGKV) and Lys99. Asp194 serves as the catalytic Proton acceptor. In terms of domain architecture, AGC-kinase C-terminal spans 329-399 (RHINWDDLLA…VAPSVLDSIK (71 aa)). The tract at residues 407–485 (KLRSPRRLNS…SKKGRGRSGR (79 aa)) is disordered. Ser417 is subject to Phosphoserine. A Phosphothreonine modification is found at Thr420. Residue Ser423 is modified to Phosphoserine. The segment covering 436–469 (SPGPPEPMEPSLPPLLPSPPSPPPTSTAPLPIRP) has biased composition (pro residues). The Nuclear localization signal signature appears at 474–480 (KKSKKGR). Residues 474–485 (KKSKKGRGRSGR) show a composition bias toward basic residues. A Phosphoserine; by PKC modification is found at Ser476.

Belongs to the protein kinase superfamily. AGC Ser/Thr protein kinase family. S6 kinase subfamily. In terms of processing, phosphorylated and activated by MTOR. Phosphorylation by PKC within the NLS in response to mitogenic stimuli causes cytoplasmic retention.

It localises to the cytoplasm. It is found in the nucleus. The enzyme catalyses L-seryl-[protein] + ATP = O-phospho-L-seryl-[protein] + ADP + H(+). It carries out the reaction L-threonyl-[protein] + ATP = O-phospho-L-threonyl-[protein] + ADP + H(+). Its function is as follows. Phosphorylates specifically ribosomal protein S6. Seems to act downstream of mTOR signaling in response to growth factors and nutrients to promote cell proliferation, cell growth and cell cycle progression in an alternative pathway regulated by MEAK7. The chain is Ribosomal protein S6 kinase beta-2 (Rps6kb2) from Mus musculus (Mouse).